A 624-amino-acid chain; its full sequence is Protein FAM234B (624 aa).

Residues 1–91 form a disordered region; that stretch reads MATVLSRALK…GFPSEPLGGL (91 aa). Ser-16 carries the post-translational modification Phosphoserine. Thr-26 bears the Phosphothreonine mark. A phosphoserine mark is found at Ser-30, Ser-33, and Ser-63. A helical membrane pass occupies residues 107–127; the sequence is VFLLTLVISMVLVLLCAFLIP.

It belongs to the FAM234 family.

Its subcellular location is the membrane. The protein resides in the golgi outpost. It localises to the cytoplasm. It is found in the cytoskeleton. The protein localises to the microtubule organizing center. The sequence is that of Protein FAM234B from Mus musculus (Mouse).